A 199-amino-acid polypeptide reads, in one-letter code: Glycerol-3-phosphate acyltransferase (199 aa).

The next 5 membrane-spanning stretches (helical) occupy residues 3–23 (AAVWTLLLAYLFGSVPAGVLV), 50–70 (WGPALVVAFFDVFKGGIAVLV), 78–98 (DWMLGGVALMAVLGHNYSVFL), 113–133 (LLFLDPVLALWTFPIGLSVIL), and 154–174 (LALGRPLWEVATVFLMALLIF).

This sequence belongs to the PlsY family. In terms of assembly, probably interacts with PlsX.

It is found in the cell inner membrane. It catalyses the reaction an acyl phosphate + sn-glycerol 3-phosphate = a 1-acyl-sn-glycero-3-phosphate + phosphate. Its pathway is lipid metabolism; phospholipid metabolism. Functionally, catalyzes the transfer of an acyl group from acyl-phosphate (acyl-PO(4)) to glycerol-3-phosphate (G3P) to form lysophosphatidic acid (LPA). This enzyme utilizes acyl-phosphate as fatty acyl donor, but not acyl-CoA or acyl-ACP. The chain is Glycerol-3-phosphate acyltransferase from Thermus thermophilus (strain ATCC 27634 / DSM 579 / HB8).